Here is a 545-residue protein sequence, read N- to C-terminus: Carboxypeptidase Y homolog A (545 aa).

Residues 1-18 (MKSSLALALLVGGAIASG) form the signal peptide. A propeptide spanning residues 19–125 (PQQQVLREPV…RLDTYDLRVK (107 aa)) is cleaved from the precursor. Disulfide bonds link Cys179/Cys418, Cys313/Cys327, Cys337/Cys360, Cys344/Cys353, and Cys382/Cys388. Asn210 carries an N-linked (GlcNAc...) asparagine glycan. Ser266 is an active-site residue. Asp457 is a catalytic residue. Asn487 and Asn507 each carry an N-linked (GlcNAc...) asparagine glycan. The active site involves His518.

The protein belongs to the peptidase S10 family.

The protein resides in the vacuole. It carries out the reaction Release of a C-terminal amino acid with broad specificity.. Vacuolar carboxypeptidase involved in degradation of small peptides. Digests preferentially peptides containing an aliphatic or hydrophobic residue in P1' position, as well as methionine, leucine or phenylalanine in P1 position of ester substrate. This chain is Carboxypeptidase Y homolog A (CPYA), found in Ajellomyces capsulatus (strain NAm1 / WU24) (Darling's disease fungus).